The chain runs to 229 residues: Putative ankyrin repeat protein L148 (229 aa).

ANK repeat units follow at residues I70–Y95, I96–I126, N127–A156, and Y157–A186.

This is Putative ankyrin repeat protein L148 from Acanthamoeba polyphaga (Amoeba).